The sequence spans 380 residues: Cytochrome b (380 aa).

A run of 4 helical transmembrane segments spans residues 34 to 54, 78 to 99, 114 to 134, and 179 to 199; these read FGSLLGICLVTQIITGLLLAA, WLIRNLHANGASLFFICIYLHI, WNIGVILLLTLMATAFVGYVL, and FFALHFLLPFVIAGLTLVHLT. Heme b is bound by residues His84 and His98. Heme b-binding residues include His183 and His197. His202 contributes to the a ubiquinone binding site. A run of 4 helical transmembrane segments spans residues 227 to 247, 289 to 309, 321 to 341, and 348 to 368; these read IKDILGFALMLISLATLALFS, LGGVLALAASVLILFLIPLLH, LSQILFWILVTDLLILTWVGS, and FIIIGQLASFSYFMIILVLFP.

Belongs to the cytochrome b family. As to quaternary structure, the cytochrome bc1 complex contains 11 subunits: 3 respiratory subunits (MT-CYB, CYC1 and UQCRFS1), 2 core proteins (UQCRC1 and UQCRC2) and 6 low-molecular weight proteins (UQCRH/QCR6, UQCRB/QCR7, UQCRQ/QCR8, UQCR10/QCR9, UQCR11/QCR10 and a cleavage product of UQCRFS1). This cytochrome bc1 complex then forms a dimer. Heme b is required as a cofactor.

It localises to the mitochondrion inner membrane. Functionally, component of the ubiquinol-cytochrome c reductase complex (complex III or cytochrome b-c1 complex) that is part of the mitochondrial respiratory chain. The b-c1 complex mediates electron transfer from ubiquinol to cytochrome c. Contributes to the generation of a proton gradient across the mitochondrial membrane that is then used for ATP synthesis. This chain is Cytochrome b (MT-CYB), found in Paradisaea rubra (Red bird of paradise).